Consider the following 406-residue polypeptide: Probable peptidoglycan glycosyltransferase FtsW (406 aa).

9 consecutive transmembrane segments (helical) span residues 22-42, 56-76, 86-106, 116-136, 153-173, 186-206, 280-300, 318-338, and 352-372; these read LWFV…VASA, FFMG…FMML, WGIL…VPGI, WINL…CMVV, LIGF…LLME, VIAL…IVIM, IWVE…FALM, FAGY…IINV, and LPLI…LFVV. The span at 383-397 shows a compositional bias: basic and acidic residues; that stretch reads SKGGESEERKRKSDE. The disordered stretch occupies residues 383–406; it reads SKGGESEERKRKSDESIDDGEALA.

This sequence belongs to the SEDS family. FtsW subfamily.

The protein resides in the cell inner membrane. It carries out the reaction [GlcNAc-(1-&gt;4)-Mur2Ac(oyl-L-Ala-gamma-D-Glu-L-Lys-D-Ala-D-Ala)](n)-di-trans,octa-cis-undecaprenyl diphosphate + beta-D-GlcNAc-(1-&gt;4)-Mur2Ac(oyl-L-Ala-gamma-D-Glu-L-Lys-D-Ala-D-Ala)-di-trans,octa-cis-undecaprenyl diphosphate = [GlcNAc-(1-&gt;4)-Mur2Ac(oyl-L-Ala-gamma-D-Glu-L-Lys-D-Ala-D-Ala)](n+1)-di-trans,octa-cis-undecaprenyl diphosphate + di-trans,octa-cis-undecaprenyl diphosphate + H(+). It participates in cell wall biogenesis; peptidoglycan biosynthesis. In terms of biological role, peptidoglycan polymerase that is essential for cell division. The protein is Probable peptidoglycan glycosyltransferase FtsW of Marinomonas mediterranea (strain ATCC 700492 / JCM 21426 / NBRC 103028 / MMB-1).